The sequence spans 169 residues: Protein yop1 (169 aa).

At 1–35 the chain is on the cytoplasmic side; the sequence is MASFQDRAQHTIAQLDKELSKYPVLNNLERQTSVP. The helical transmembrane segment at 36-55 threads the bilayer; sequence KVYVILGLGGIYTFLVFFNI. Residue Ala56 is a topological domain, lumenal. The chain crosses the membrane as a helical span at residues 57–76; that stretch reads GQLLVNLAGFILPTYYSLDA. The Cytoplasmic portion of the chain corresponds to 77-88; sequence LFSAGKADDTQW. A helical transmembrane segment spans residues 89 to 103; sequence LTYWVVYAFFTVVES. The Lumenal segment spans residues 104-105; the sequence is AI. A helical membrane pass occupies residues 106–124; it reads SAPYWFPFYYIFKFALVLW. The Cytoplasmic portion of the chain corresponds to 125–169; the sequence is LALPQTNGAQIVFKSLVQPLVGRYFTGGSTSANLRAQADAATKSQ.

It belongs to the DP1 family. As to quaternary structure, oligomer.

The protein localises to the endoplasmic reticulum membrane. It localises to the golgi apparatus membrane. Functionally, required to generate and maintain the structure of the tubular endoplasmic reticulum network and the vacuole. Induces high curvature in membranes and causes membrane tubule formation. Involved in membrane/vesicle trafficking. This is Protein yop1 (yop1) from Emericella nidulans (strain FGSC A4 / ATCC 38163 / CBS 112.46 / NRRL 194 / M139) (Aspergillus nidulans).